We begin with the raw amino-acid sequence, 29 residues long: MKRSYKTLPTYFFSFFGPFKERAVFLLVL.

This is an uncharacterized protein from Saccharomyces cerevisiae (strain ATCC 204508 / S288c) (Baker's yeast).